We begin with the raw amino-acid sequence, 262 residues long: 3-methyl-2-oxobutanoate hydroxymethyltransferase (262 aa).

Mg(2+) is bound by residues Asp43 and Asp82. Residues 43–44, Asp82, and Lys110 each bind 3-methyl-2-oxobutanoate; that span reads DS. Residue Glu112 participates in Mg(2+) binding. The active-site Proton acceptor is the Glu179.

This sequence belongs to the PanB family. In terms of assembly, homodecamer; pentamer of dimers. It depends on Mg(2+) as a cofactor.

Its subcellular location is the cytoplasm. The enzyme catalyses 3-methyl-2-oxobutanoate + (6R)-5,10-methylene-5,6,7,8-tetrahydrofolate + H2O = 2-dehydropantoate + (6S)-5,6,7,8-tetrahydrofolate. It participates in cofactor biosynthesis; (R)-pantothenate biosynthesis; (R)-pantoate from 3-methyl-2-oxobutanoate: step 1/2. In terms of biological role, catalyzes the reversible reaction in which hydroxymethyl group from 5,10-methylenetetrahydrofolate is transferred onto alpha-ketoisovalerate to form ketopantoate. The protein is 3-methyl-2-oxobutanoate hydroxymethyltransferase of Sodalis glossinidius (strain morsitans).